We begin with the raw amino-acid sequence, 380 residues long: Cytochrome b (380 aa).

4 helical membrane-spanning segments follow: residues 34 to 54 (FGSLLGICLITQILTGLLLAM), 78 to 99 (WLIRNLHANGASLFFICVYLHI), 114 to 134 (WNTGIILLLTLMATAFVGYVL), and 179 to 199 (FFALHFLLPFLIAGLTLIHLT). His-84 and His-98 together coordinate heme b. Residues His-183 and His-197 each contribute to the heme b site. A ubiquinone is bound at residue His-202. 4 consecutive transmembrane segments (helical) span residues 227–247 (LKDLLGAALMLSPLAILALFT), 289–309 (LGGVLALAASVLILFLSPFLH), 321–341 (LSQLLFWFLVANLLILTWVGS), and 348–368 (FIIIGQLASFTYFTTLLVLLP).

The protein belongs to the cytochrome b family. As to quaternary structure, the cytochrome bc1 complex contains 11 subunits: 3 respiratory subunits (MT-CYB, CYC1 and UQCRFS1), 2 core proteins (UQCRC1 and UQCRC2) and 6 low-molecular weight proteins (UQCRH/QCR6, UQCRB/QCR7, UQCRQ/QCR8, UQCR10/QCR9, UQCR11/QCR10 and a cleavage product of UQCRFS1). This cytochrome bc1 complex then forms a dimer. Requires heme b as cofactor.

It is found in the mitochondrion inner membrane. Its function is as follows. Component of the ubiquinol-cytochrome c reductase complex (complex III or cytochrome b-c1 complex) that is part of the mitochondrial respiratory chain. The b-c1 complex mediates electron transfer from ubiquinol to cytochrome c. Contributes to the generation of a proton gradient across the mitochondrial membrane that is then used for ATP synthesis. The sequence is that of Cytochrome b (MT-CYB) from Herpetotheres cachinnans (Laughing falcon).